A 431-amino-acid chain; its full sequence is Glutamate-1-semialdehyde 2,1-aminomutase (431 aa).

At Lys265 the chain carries N6-(pyridoxal phosphate)lysine.

Belongs to the class-III pyridoxal-phosphate-dependent aminotransferase family. HemL subfamily. As to quaternary structure, homodimer. Pyridoxal 5'-phosphate serves as cofactor.

The protein localises to the cytoplasm. The catalysed reaction is (S)-4-amino-5-oxopentanoate = 5-aminolevulinate. It functions in the pathway porphyrin-containing compound metabolism; protoporphyrin-IX biosynthesis; 5-aminolevulinate from L-glutamyl-tRNA(Glu): step 2/2. The chain is Glutamate-1-semialdehyde 2,1-aminomutase from Vibrio campbellii (strain ATCC BAA-1116).